The following is a 98-amino-acid chain: Cystatin-B (98 aa).

The residue at position 1 (Met-1) is an N-acetylmethionine. The Secondary area of contact motif lies at 46-50 (QVVAG).

Belongs to the cystatin family. As to quaternary structure, able to form dimers stabilized by noncovalent forces.

The protein localises to the cytoplasm. It is found in the nucleus. This is an intracellular thiol proteinase inhibitor. Tightly binding reversible inhibitor of cathepsins L, H and B. The sequence is that of Cystatin-B (CSTB) from Pongo pygmaeus (Bornean orangutan).